The primary structure comprises 129 residues: Small ribosomal subunit protein uS11 (129 aa).

Belongs to the universal ribosomal protein uS11 family. In terms of assembly, part of the 30S ribosomal subunit. Interacts with proteins S7 and S18. Binds to IF-3.

Located on the platform of the 30S subunit, it bridges several disparate RNA helices of the 16S rRNA. Forms part of the Shine-Dalgarno cleft in the 70S ribosome. This chain is Small ribosomal subunit protein uS11, found in Bartonella tribocorum (strain CIP 105476 / IBS 506).